Consider the following 389-residue polypeptide: Phospho-N-acetylmuramoyl-pentapeptide-transferase (389 aa).

10 helical membrane passes run 21 to 41, 70 to 90, 97 to 117, 134 to 154, 189 to 209, 222 to 242, 259 to 279, 286 to 306, 311 to 331, and 366 to 386; these read FITF…LVTG, GTPT…TLLW, FIWV…VDDY, YMWQ…SVSA, TISY…VIVG, GLAI…AYLT, AGEL…FLWF, VFMG…IAVI, VVLF…MLQV, and QVVV…LSTL.

The protein belongs to the glycosyltransferase 4 family. MraY subfamily. Mg(2+) is required as a cofactor.

It localises to the cell inner membrane. It catalyses the reaction UDP-N-acetyl-alpha-D-muramoyl-L-alanyl-gamma-D-glutamyl-meso-2,6-diaminopimeloyl-D-alanyl-D-alanine + di-trans,octa-cis-undecaprenyl phosphate = di-trans,octa-cis-undecaprenyl diphospho-N-acetyl-alpha-D-muramoyl-L-alanyl-D-glutamyl-meso-2,6-diaminopimeloyl-D-alanyl-D-alanine + UMP. The protein operates within cell wall biogenesis; peptidoglycan biosynthesis. Catalyzes the initial step of the lipid cycle reactions in the biosynthesis of the cell wall peptidoglycan: transfers peptidoglycan precursor phospho-MurNAc-pentapeptide from UDP-MurNAc-pentapeptide onto the lipid carrier undecaprenyl phosphate, yielding undecaprenyl-pyrophosphoryl-MurNAc-pentapeptide, known as lipid I. This Janthinobacterium sp. (strain Marseille) (Minibacterium massiliensis) protein is Phospho-N-acetylmuramoyl-pentapeptide-transferase.